We begin with the raw amino-acid sequence, 160 residues long: Putative pre-16S rRNA nuclease (160 aa).

This sequence belongs to the YqgF nuclease family.

It is found in the cytoplasm. Its function is as follows. Could be a nuclease involved in processing of the 5'-end of pre-16S rRNA. In Cereibacter sphaeroides (strain ATCC 17025 / ATH 2.4.3) (Rhodobacter sphaeroides), this protein is Putative pre-16S rRNA nuclease.